The following is a 389-amino-acid chain: MTLRSLILEMRSRPHRVVHDLAAAAAADSTSVSSQDYRWSEIPEELLREILIRVEAADGGGWPSRRSVVACAGVCRGWRLLMNETVVVPEISSKLTFPISLKQPGPRDSLVQCFIKRNRITQSYHLYLGLTNSLTDDGKFLLAACKLKHTTCTDYIISLRSDDMSRRSQAYVGKVRSNFLGTKFTVFDGNLLPSTGAAKLRKSRSYNPAKVSAKVPLGSYPVAHITYELNVLGSRGPRKMQCLMDTIPTSTMEPQGVASEPSEFPLLGTRSTLSRSQSKPLRSSSSHLKETPLVLSNKTPRWHEQLRCWCLNFHGRVTVASVKNFQLVAAGASCGSGTGMSPERQSERIILQFGKVGKDMFTMDYGYPISAFQAFAICLSSFETRIACE.

Residues 36-82 enclose the F-box domain; that stretch reads DYRWSEIPEELLREILIRVEAADGGGWPSRRSVVACAGVCRGWRLLM. The segment at 250–289 is disordered; that stretch reads STMEPQGVASEPSEFPLLGTRSTLSRSQSKPLRSSSSHLK. Low complexity predominate over residues 273 to 286; that stretch reads LSRSQSKPLRSSSS.

It belongs to the TUB family. Ubiquitous.

The chain is Tubby-like F-box protein 11 from Arabidopsis thaliana (Mouse-ear cress).